Reading from the N-terminus, the 196-residue chain is GTP cyclohydrolase-2 (196 aa).

49–53 serves as a coordination point for GTP; the sequence is RVHSE. Zn(2+) contacts are provided by Cys-54, Cys-65, and Cys-67. GTP is bound by residues Gln-70, 92–94, and Thr-114; that span reads EGR. The Proton acceptor role is filled by Asp-126. The Nucleophile role is filled by Arg-128. Residues Thr-149 and Lys-154 each contribute to the GTP site.

The protein belongs to the GTP cyclohydrolase II family. In terms of assembly, homodimer. It depends on Zn(2+) as a cofactor.

The catalysed reaction is GTP + 4 H2O = 2,5-diamino-6-hydroxy-4-(5-phosphoribosylamino)-pyrimidine + formate + 2 phosphate + 3 H(+). It functions in the pathway cofactor biosynthesis; riboflavin biosynthesis; 5-amino-6-(D-ribitylamino)uracil from GTP: step 1/4. Functionally, catalyzes the conversion of GTP to 2,5-diamino-6-ribosylamino-4(3H)-pyrimidinone 5'-phosphate (DARP), formate and pyrophosphate. The polypeptide is GTP cyclohydrolase-2 (Citrobacter koseri (strain ATCC BAA-895 / CDC 4225-83 / SGSC4696)).